Reading from the N-terminus, the 223-residue chain is MTIERNMKGLLGTKLGMTQVWDENNRVVPVTVIAAGTNVVTQVRTPATDGYNAIQVGYGEIDGRKVTKPQAGHFGKAGTTPRRHLVEIRTALAADYTVGQELAVDTFAAGEEIDVTGTSKGKGFAGTMKRHGFAGVSASHGAHRNHRKPGSIGACATPGRVFKGVRMAGRMGTDTVTTQNVTVHAVDTAKGLILLKGAVPGPKGGLVVLRSAAKSSLTSGKEV.

This sequence belongs to the universal ribosomal protein uL3 family. As to quaternary structure, part of the 50S ribosomal subunit. Forms a cluster with proteins L14 and L19.

In terms of biological role, one of the primary rRNA binding proteins, it binds directly near the 3'-end of the 23S rRNA, where it nucleates assembly of the 50S subunit. This chain is Large ribosomal subunit protein uL3, found in Nocardioides sp. (strain ATCC BAA-499 / JS614).